Here is a 444-residue protein sequence, read N- to C-terminus: Methionine aminopeptidase 2-1 (444 aa).

A disordered region spans residues 1–92 (MAAQVTEKLQ…VPVSNLFPNN (92 aa)). Residues 15–29 (NGQNGDAKANSTAVG) show a composition bias toward polar residues. A compositionally biased stretch (acidic residues) spans 34 to 45 (GEAEDDSDDEKE). Basic residues predominate over residues 59–73 (AKKKKRKSKKKKKGG). Histidine 197 lines the substrate pocket. A divalent metal cation contacts are provided by aspartate 217, aspartate 228, and histidine 297. Histidine 305 provides a ligand contact to substrate. The a divalent metal cation site is built by glutamate 330 and glutamate 425.

The protein belongs to the peptidase M24A family. Methionine aminopeptidase eukaryotic type 2 subfamily. Co(2+) is required as a cofactor. It depends on Zn(2+) as a cofactor. Requires Mn(2+) as cofactor. Fe(2+) serves as cofactor.

It localises to the cytoplasm. The catalysed reaction is Release of N-terminal amino acids, preferentially methionine, from peptides and arylamides.. In terms of biological role, cotranslationally removes the N-terminal methionine from nascent proteins. The N-terminal methionine is often cleaved when the second residue in the primary sequence is small and uncharged (Met-Ala-, Cys, Gly, Pro, Ser, Thr, or Val). In Neosartorya fischeri (strain ATCC 1020 / DSM 3700 / CBS 544.65 / FGSC A1164 / JCM 1740 / NRRL 181 / WB 181) (Aspergillus fischerianus), this protein is Methionine aminopeptidase 2-1.